Consider the following 1687-residue polypeptide: MRRPPPLGPTTASGPEGNVRNLRKRQAPGPGAAGGCGPEAGGRGENRQKRRMVARATPGRGEVKSDKSVAASGAGKAARRRVEGRRGQVSPSDRRGLEAAKEAEFPLQTERHTKEKRKVTEASTDDPQPGFDLVRKESLTSSESFQTVECLRSLGKEGIVEGIKRRIRNKKLKSLENPPLKITENEATQNIKVEFQDELYKNTLKYSCNILSPEVENNFVFKLRDCNCFPHSKDCNDENNLPYEPDGGCMHVAENFSKKENFRSLAEKSDTNNIPQLLQTEENVMGVNKLLPEESDLYQSKINGLLPCLQREKNKYSIEESSVGRKPRKRMKLSEKADETVTQMNFSNEYNKSELMLQENQMIADGKEAEAKSPLNVLRKVSHNTVSLMDHLLSVPEMVEKETSSEHHVNAVFQKTIEPLLKEETENASEPLGYENMALKEDFKSKSCIGKSPEYHIERRSSREDLRSDSEELKLSCQRTIPMTGKRTWPYYSCARISAWCWKKASLPESSYFLPGSQKSCKKVDVPKHQTNKTHLTDSKLLLQSSLTETNTESSSKEKLDSNLNCLFSVSAVEHTLMVIKEPIIKDDKKIKSEELSRSGSEVISNTTEDTQLTSDTQSLTGNKKRDRGNLTKLNLTAASKDGQEANNSTGKTIHRKACVAKQTFVVPDLVKILNTGRLTNFKIPLLKNKTKKRKEVNAKSSEREAYSPLELLDNLSGADTRQNRSKENVSMTMLGPQTLSIQNSVTPVQASSDSFYNKNSCSISPSFTKHGNSSKPSNHFSEPGNIVSNKEVASLTVENNAFSSDPGYVEKSPSFCCNKQETFRPVSSEVRGRKITKNFSEVGFPDILKAYEDDVLLIDVIQDDPDLFGVSNEGELSFTSEVPRISQEPNVPGEHQLTDSKYVETPVKKEPSDDLRELPVLDCGPIKPDICASNSAASEIRHDPKDANTSLGEVANETSENETLGDFSEQIKGSDLDEKHRFTDKVITKEEKENIYEVRKSKDSRNADIMVGECQFAAPVPKPLCLLVPPLNLSGHQEDTILNTWMNDFRFLGKHSVLKLQNPETCEIFKREKNVGVFQKSLGLMIPYKYCKFHFNTLRGCERPLCKFAHVPEQGDEKVCMDVFKKYININELCLLQRAVNVFMEYYRKFPPGIYFDLQVLNDLLNSLLKHCLLKEVFQIVNLSIMVKMLPSLKILLNIFEHVATMKLRNAVPALIDIFCKLVEAGMVLDPEHFNYIVKLLYQVQASKQEITAVLEMKSRLQMRQFKKNWKCDLDSALNKLEHCKEKGDWTKLGKLYINVKMGCEKFADFQTFCACIAETLTKNCEDERPDTPFCEFAETVSKDPQNSKVDKGVLGRIGISAMYFYHKLLQWSKGRKVLDKLYELKIHFASLKGLIGPEKLASRCQIVNVAAEIFLKSGSLDGALWVMRESEWIIDTPLWPCDRLDVLNRHNLLCTIAHETLAKSLYRQTFEVLQNLPGFQNSQETVEVSQYSLLFNKLLGSCIESNSLGMSSSVAEFMISKSIPIDFSFLRRLITSLGRSRLWLKARAHYKSALSLGCYPPLEGNLYRKLLLIPSYLSEIEMLLAIEIFMVSNASSIQSPGTSTQILQIVLKRCEDNQSRSNDDYQAAVERLIMAARISDPKLFVKHMTVNVNKEQVYSLEHCSALKWLKENMKWAGKVWLFSNH.

3 disordered regions span residues 1–132, 596–632, and 938–969; these read MRRP…PGFD, LSRSGSEVISNTTEDTQLTSDTQSLTGNKKRDRGNLT, and ASEIRHDPKDANTSLGEVANETSENETLGDFS. A compositionally biased stretch (gly residues) spans 31–41; it reads GAAGGCGPEAG. Basic and acidic residues predominate over residues 80 to 113; it reads RRVEGRRGQVSPSDRRGLEAAKEAEFPLQTERHT. 2 stretches are compositionally biased toward polar residues: residues 598–622 and 948–963; these read RSGSEVISNTTEDTQLTSDTQSLTG and ANTSLGEVANETSENE.

It is found in the cytoplasm. The protein localises to the cytosol. Its function is as follows. Important for normal spermatogenesis and male fertility. Specifically required for progression to the post-meiotic stages of spermatocyte development. Seems to be necessary for normal expression levels of a number of testis-expressed gene transcripts, although its role in this process is unclear. In Macaca mulatta (Rhesus macaque), this protein is Protein TOPAZ1 (TOPAZ1).